The following is a 3953-amino-acid chain: Zinc finger protein 469 (3953 aa).

Disordered regions lie at residues 1–274 (MPGE…VSFQ), 313–465 (WPEE…MFFN), 512–672 (EWQG…FPFP), 763–784 (GHQRSPGPPGLPSPPAAPRVPA), 869–1383 (ADEE…HSEL), 1400–1461 (PKPS…DLPV), 1575–1610 (LQRSKDTRGAPRELAEAESVGRVELGTGTEPPSQRR), 1703–1864 (SKTG…GASS), 1884–1947 (VSNT…TVEG), 1991–2030 (KTQGQGTANQLQPENGVSPGGTDNHASVNASPKTALTGPT), 2070–2700 (LTAA…TLGP), 2716–2915 (AGET…LSDS), 3001–3036 (EMPAPADDSSSSLGDVSPEPPSLERERCDGGLPGNT), and 3072–3110 (GPSFLDFEGTASSQGPQSRRTEEAAGAGRAQGRGRPAKG). Polar residues predominate over residues 187–198 (PPSSFTSTNYTS). Pro residues-rich tracts occupy residues 202–211 (TPRPPAPGPP) and 324–335 (YPLPTQPAPSPL). Low complexity predominate over residues 603–623 (STCSSLSPMSSSPANPSSEES). 2 stretches are compositionally biased toward pro residues: residues 768–780 (PGPPGLPSPPAAP) and 896–911 (KAPPPLPAATPDPQTP). Positions 944–953 (QQRRGKQLKL) are enriched in basic residues. Residues 963-975 (AAEGSGSGGGGRA) show a composition bias toward gly residues. The segment covering 981 to 991 (RRNDGLGERPP) has biased composition (basic and acidic residues). Low complexity predominate over residues 1005 to 1017 (RADPAPRVPRAAA). Basic residues-rich tracts occupy residues 1025-1042 (SRRRRLPPRKDPRKRKAR) and 1058-1070 (KNRRHRRLGRRAG). Over residues 1082 to 1093 (PGAEDRRLREYD) the composition is skewed to basic and acidic residues. Over residues 1094–1103 (FASESEEDEQ) the composition is skewed to acidic residues. The segment covering 1120-1137 (KRKEVELTQGPREDEPQK) has biased composition (basic and acidic residues). Over residues 1158–1177 (PGGSRPGPGRSPQARGPSRS) the composition is skewed to low complexity. Positions 1213 to 1229 (EETRPSLDFPQEAKEPE) are enriched in basic and acidic residues. Composition is skewed to polar residues over residues 1278 to 1290 (PKPSGSLANTAPH) and 1333 to 1350 (NPSSTACPKPSVLSSKIS). Basic and acidic residues predominate over residues 1577-1595 (RSKDTRGAPRELAEAESVG). 2 stretches are compositionally biased toward polar residues: residues 1991-2005 (KTQGQGTANQLQPEN) and 2014-2024 (NHASVNASPKT). Residues 2243–2262 (DTPKDSTLRIPEDSRKEKLW) are compositionally biased toward basic and acidic residues. Polar residues predominate over residues 2409-2435 (TAPSSTASDFQSDSPQSHRNASHQTPQ). Residues 2472-2498 (VTCEVCAASFRSGPGLSRHKARKHRPH) form a C2H2-type 1 zinc finger. Residues 2488–2498 (SRHKARKHRPH) are compositionally biased toward basic residues. The span at 2506 to 2521 (SPAALPAQQPLEPLAQ) shows a compositional bias: low complexity. Residues 2534–2546 (SGKERPNHSRGDP) show a composition bias toward basic and acidic residues. Low complexity predominate over residues 2565-2574 (PGSPHSQQLH). Over residues 2592 to 2631 (PRPDQAREDELHPKQAEKREGRRWRREPTVDSPSHSEGKS) the composition is skewed to basic and acidic residues. Residues 2632 to 2642 (NKKRGKLRGRR) are compositionally biased toward basic residues. The segment covering 2664-2676 (PSPAMASYAASPS) has biased composition (low complexity). Positions 2777-2787 (DSSRAHSRSEE) are enriched in basic and acidic residues. The span at 2805-2816 (TSSSPADSTTSS) shows a compositional bias: low complexity. The span at 2869 to 2879 (LTRKRNPHVYG) shows a compositional bias: basic residues. The span at 3095–3105 (AAGAGRAQGRG) shows a compositional bias: low complexity. The C2H2-type 2 zinc-finger motif lies at 3115–3137 (YKCKVCFQRFRSLGELDLHKLAH). Residues 3232–3322 (TEPAPKHHRG…PDPWAGGEPL (91 aa)) form a disordered region. Positions 3260-3272 (GEAKKDSPGERAK) are enriched in basic and acidic residues. The segment covering 3302-3314 (PGPPRTTPSPSPD) has biased composition (pro residues). C2H2-type zinc fingers lie at residues 3337 to 3359 (RDCHHCGKRFPKPFKLQRHLAVH) and 3365 to 3388 (YLCPRCPRVYPEHGELLAHLGGAH). The C2H2-type 5; degenerate zinc-finger motif lies at 3418–3442 (FACSSCNYTFAKKEQFDRHMNKHLR). Disordered stretches follow at residues 3448 to 3501 (FAFR…PILS), 3518 to 3559 (STTK…SPFP), and 3576 to 3925 (ERPE…HRTA). The segment covering 3584-3602 (PGSPGPLLQQALPLGASLP) has biased composition (low complexity). Over residues 3633 to 3651 (CAPDHFQEDHLLQKEKEVS) the composition is skewed to basic and acidic residues. Low complexity-rich tracts occupy residues 3728–3741 (PGPSSQGSGSPRPG) and 3749–3759 (QPQPASGQLQS). 2 stretches are compositionally biased toward basic and acidic residues: residues 3876–3892 (EQRKAEPGHTQRKDRLG) and 3915–3925 (EPAEPHTHRTA).

It belongs to the krueppel C2H2-type zinc-finger protein family. As to expression, detected in cornea, sclera, skin fibroblasts and striated muscle.

The protein localises to the nucleus. Functionally, may be involved in transcriptional regulation. In Homo sapiens (Human), this protein is Zinc finger protein 469 (ZNF469).